A 748-amino-acid chain; its full sequence is Phosphoenolpyruvate-dependent phosphotransferase system (748 aa).

The GAF domain maps to 1–127 (MLTRLREIVE…RRQLLGVLVV (127 aa)). Residues 128-170 (QQRELRQYDESEESFLVTLATQMAAILSQSQVTALFGQYRQTR) form a linker region. Residues 171 to 748 (IRALPAAPGV…GMGGLIRGGL (578 aa)) form a PTS EI region. Histidine 356 (tele-phosphohistidine intermediate) is an active-site residue. Phosphoenolpyruvate is bound by residues arginine 462 and arginine 498. Glutamate 597 and aspartate 621 together coordinate Mg(2+). Residues 620-621 (ND) and arginine 631 contribute to the phosphoenolpyruvate site. Catalysis depends on cysteine 668, which acts as the Proton donor.

Belongs to the PEP-utilizing enzyme family. Mg(2+) serves as cofactor.

It localises to the cytoplasm. It catalyses the reaction L-histidyl-[protein] + phosphoenolpyruvate = N(pros)-phospho-L-histidyl-[protein] + pyruvate. Its function is as follows. Component of the phosphoenolpyruvate-dependent nitrogen-metabolic phosphotransferase system (nitrogen-metabolic PTS), that seems to be involved in regulating nitrogen metabolism. Enzyme I-Ntr transfers the phosphoryl group from phosphoenolpyruvate (PEP) to the phosphoryl carrier protein (NPr). Could function in the transcriptional regulation of sigma-54 dependent operons in conjunction with the NPr (PtsO) and EIIA-Ntr (PtsN) proteins. Enzyme I-Ntr is specific for NPr. In Salmonella typhimurium (strain LT2 / SGSC1412 / ATCC 700720), this protein is Phosphoenolpyruvate-dependent phosphotransferase system (ptsP).